A 385-amino-acid chain; its full sequence is Outer membrane protein assembly factor BamB (385 aa).

Positions 1 to 20 (MRKVLKKAALCTFGFSMLFG) are cleaved as a signal peptide. A lipid anchor (N-palmitoyl cysteine) is attached at C21. Residue C21 is the site of S-diacylglycerol cysteine attachment.

Belongs to the BamB family. In terms of assembly, part of the Bam complex.

Its subcellular location is the cell outer membrane. In terms of biological role, part of the outer membrane protein assembly complex, which is involved in assembly and insertion of beta-barrel proteins into the outer membrane. The protein is Outer membrane protein assembly factor BamB of Aliivibrio fischeri (strain ATCC 700601 / ES114) (Vibrio fischeri).